Consider the following 269-residue polypeptide: uncharacterized protein (269 aa).

15–41 serves as a coordination point for NADP(+); it reads QKSVLITGCSSGIGLESALELKRQGFH. Ser-146 contacts substrate. Tyr-159 serves as the catalytic Proton acceptor.

The protein belongs to the short-chain dehydrogenases/reductases (SDR) family.

This is an uncharacterized protein from Escherichia coli O6:H1 (strain CFT073 / ATCC 700928 / UPEC).